The chain runs to 736 residues: Phosphoribosylformylglycinamidine synthase subunit PurL (736 aa).

The active site involves H48. Y51 and K90 together coordinate ATP. Mg(2+) is bound at residue E92. Substrate-binding positions include 93–96 and R115; that span reads SHNH. The Proton acceptor role is filled by H94. D116 is a Mg(2+) binding site. Residue Q239 participates in substrate binding. D267 contacts Mg(2+). Residue 311-313 coordinates substrate; sequence ESQ. 2 residues coordinate ATP: D492 and G529. Position 530 (N530) interacts with Mg(2+). S532 contributes to the substrate binding site.

Belongs to the FGAMS family. As to quaternary structure, monomer. Part of the FGAM synthase complex composed of 1 PurL, 1 PurQ and 2 PurS subunits.

It is found in the cytoplasm. It carries out the reaction N(2)-formyl-N(1)-(5-phospho-beta-D-ribosyl)glycinamide + L-glutamine + ATP + H2O = 2-formamido-N(1)-(5-O-phospho-beta-D-ribosyl)acetamidine + L-glutamate + ADP + phosphate + H(+). The protein operates within purine metabolism; IMP biosynthesis via de novo pathway; 5-amino-1-(5-phospho-D-ribosyl)imidazole from N(2)-formyl-N(1)-(5-phospho-D-ribosyl)glycinamide: step 1/2. In terms of biological role, part of the phosphoribosylformylglycinamidine synthase complex involved in the purines biosynthetic pathway. Catalyzes the ATP-dependent conversion of formylglycinamide ribonucleotide (FGAR) and glutamine to yield formylglycinamidine ribonucleotide (FGAM) and glutamate. The FGAM synthase complex is composed of three subunits. PurQ produces an ammonia molecule by converting glutamine to glutamate. PurL transfers the ammonia molecule to FGAR to form FGAM in an ATP-dependent manner. PurS interacts with PurQ and PurL and is thought to assist in the transfer of the ammonia molecule from PurQ to PurL. The sequence is that of Phosphoribosylformylglycinamidine synthase subunit PurL from Beijerinckia indica subsp. indica (strain ATCC 9039 / DSM 1715 / NCIMB 8712).